The sequence spans 281 residues: NADPH-dependent 7-cyano-7-deazaguanine reductase (281 aa).

87-89 (IES) contacts substrate. 89-90 (SK) contacts NADPH. Catalysis depends on Cys188, which acts as the Thioimide intermediate. Asp195 acts as the Proton donor in catalysis. 227–228 (HE) lines the substrate pocket. 256–257 (RG) lines the NADPH pocket. The disordered stretch occupies residues 261–281 (INPYRSTEQDKPAHNNRMARQ).

This sequence belongs to the GTP cyclohydrolase I family. QueF type 2 subfamily. Homodimer.

It is found in the cytoplasm. It carries out the reaction 7-aminomethyl-7-carbaguanine + 2 NADP(+) = 7-cyano-7-deazaguanine + 2 NADPH + 3 H(+). It participates in tRNA modification; tRNA-queuosine biosynthesis. Its function is as follows. Catalyzes the NADPH-dependent reduction of 7-cyano-7-deazaguanine (preQ0) to 7-aminomethyl-7-deazaguanine (preQ1). The polypeptide is NADPH-dependent 7-cyano-7-deazaguanine reductase (Vibrio campbellii (strain ATCC BAA-1116)).